A 283-amino-acid chain; its full sequence is 4-diphosphocytidyl-2-C-methyl-D-erythritol kinase (283 aa).

The active site involves Lys10. 99-109 (PMGGGLGGGSS) lines the ATP pocket. The active site involves Asp141.

This sequence belongs to the GHMP kinase family. IspE subfamily. As to quaternary structure, homodimer.

The catalysed reaction is 4-CDP-2-C-methyl-D-erythritol + ATP = 4-CDP-2-C-methyl-D-erythritol 2-phosphate + ADP + H(+). The protein operates within isoprenoid biosynthesis; isopentenyl diphosphate biosynthesis via DXP pathway; isopentenyl diphosphate from 1-deoxy-D-xylulose 5-phosphate: step 3/6. Catalyzes the phosphorylation of the position 2 hydroxy group of 4-diphosphocytidyl-2C-methyl-D-erythritol. This is 4-diphosphocytidyl-2-C-methyl-D-erythritol kinase from Shigella dysenteriae serotype 1 (strain Sd197).